We begin with the raw amino-acid sequence, 542 residues long: Chaperonin GroEL 2 (542 aa).

Residues 30–33 (TLGP), K51, 87–91 (DGTTT), G415, and D494 contribute to the ATP site.

Belongs to the chaperonin (HSP60) family. As to quaternary structure, forms a cylinder of 14 subunits composed of two heptameric rings stacked back-to-back. Interacts with the co-chaperonin GroES.

It is found in the cytoplasm. The catalysed reaction is ATP + H2O + a folded polypeptide = ADP + phosphate + an unfolded polypeptide.. Its function is as follows. Together with its co-chaperonin GroES, plays an essential role in assisting protein folding. The GroEL-GroES system forms a nano-cage that allows encapsulation of the non-native substrate proteins and provides a physical environment optimized to promote and accelerate protein folding. In Syntrophobacter fumaroxidans (strain DSM 10017 / MPOB), this protein is Chaperonin GroEL 2.